We begin with the raw amino-acid sequence, 276 residues long: UDP-3-O-acyl-N-acetylglucosamine deacetylase (276 aa).

H76, H234, and D238 together coordinate Zn(2+). The Proton donor role is filled by H261.

Belongs to the LpxC family. It depends on Zn(2+) as a cofactor.

The catalysed reaction is a UDP-3-O-[(3R)-3-hydroxyacyl]-N-acetyl-alpha-D-glucosamine + H2O = a UDP-3-O-[(3R)-3-hydroxyacyl]-alpha-D-glucosamine + acetate. It functions in the pathway glycolipid biosynthesis; lipid IV(A) biosynthesis; lipid IV(A) from (3R)-3-hydroxytetradecanoyl-[acyl-carrier-protein] and UDP-N-acetyl-alpha-D-glucosamine: step 2/6. Functionally, catalyzes the hydrolysis of UDP-3-O-myristoyl-N-acetylglucosamine to form UDP-3-O-myristoylglucosamine and acetate, the committed step in lipid A biosynthesis. The sequence is that of UDP-3-O-acyl-N-acetylglucosamine deacetylase from Synechocystis sp. (strain ATCC 27184 / PCC 6803 / Kazusa).